A 389-amino-acid chain; its full sequence is Probable inactive purple acid phosphatase 29 (389 aa).

An N-terminal signal peptide occupies residues 1-34 (MADNRRRRSLFDFLLFSVFLGLACLCLSPIPATA). N80 carries an N-linked (GlcNAc...) asparagine glycan. A substrate-binding site is contributed by N136. N136 provides a ligand contact to Zn(2+). N-linked (GlcNAc...) asparagine glycosylation is found at N191 and N267. H303 contacts Zn(2+). Substrate is bound at residue 303–305 (HDH). H305 is a Fe cation binding site. N380 carries N-linked (GlcNAc...) asparagine glycosylation.

The protein belongs to the metallophosphoesterase superfamily. Purple acid phosphatase family. Homodimer. Fe cation is required as a cofactor. Zn(2+) serves as cofactor. Expressed in roots, stems, leaves, flowers and siliques.

The protein localises to the secreted. This chain is Probable inactive purple acid phosphatase 29 (PAP29), found in Arabidopsis thaliana (Mouse-ear cress).